A 170-amino-acid polypeptide reads, in one-letter code: Protein SprT (170 aa).

In terms of domain architecture, SprT-like spans 22 to 165 (LQLANQHLGT…RQCGEKLQFI (144 aa)). His-78 provides a ligand contact to Zn(2+). Glu-79 is a catalytic residue. His-82 is a binding site for Zn(2+).

The protein belongs to the SprT family. It depends on Zn(2+) as a cofactor.

The protein localises to the cytoplasm. The protein is Protein SprT of Yersinia pseudotuberculosis serotype IB (strain PB1/+).